The chain runs to 454 residues: tRNA-2-methylthio-N(6)-dimethylallyladenosine synthase (454 aa).

The 117-residue stretch at 6–122 (RHYHITTFGC…LKDLLESVFD (117 aa)) folds into the MTTase N-terminal domain. [4Fe-4S] cluster contacts are provided by Cys-15, Cys-51, Cys-85, Cys-157, Cys-161, and Cys-164. Residues 143–381 (RDSKVTAWVN…HLGNLKVAER (239 aa)) enclose the Radical SAM core domain. The TRAM domain occupies 383 to 447 (QRYFGRIEEV…PFSLTGQPVE (65 aa)).

This sequence belongs to the methylthiotransferase family. MiaB subfamily. Monomer. Requires [4Fe-4S] cluster as cofactor.

The protein localises to the cytoplasm. The catalysed reaction is N(6)-dimethylallyladenosine(37) in tRNA + (sulfur carrier)-SH + AH2 + 2 S-adenosyl-L-methionine = 2-methylsulfanyl-N(6)-dimethylallyladenosine(37) in tRNA + (sulfur carrier)-H + 5'-deoxyadenosine + L-methionine + A + S-adenosyl-L-homocysteine + 2 H(+). Functionally, catalyzes the methylthiolation of N6-(dimethylallyl)adenosine (i(6)A), leading to the formation of 2-methylthio-N6-(dimethylallyl)adenosine (ms(2)i(6)A) at position 37 in tRNAs that read codons beginning with uridine. The chain is tRNA-2-methylthio-N(6)-dimethylallyladenosine synthase from Nostoc punctiforme (strain ATCC 29133 / PCC 73102).